The following is a 92-amino-acid chain: UPF0235 protein PYRAB05010 (92 aa).

It belongs to the UPF0235 family.

This chain is UPF0235 protein PYRAB05010, found in Pyrococcus abyssi (strain GE5 / Orsay).